The chain runs to 205 residues: Lymphotoxin-alpha (205 aa).

The signal sequence occupies residues 1–34 (MTPPERLFLPRVCGTTLHLLLLGLLLVLLPGAQG). O-linked (GalNAc...) threonine; partial glycosylation is present at T41. The THD domain maps to 63–205 (PAAHLIGDPS…STVFFGAFAL (143 aa)). N-linked (GlcNAc...) asparagine glycosylation is present at N96.

It belongs to the tumor necrosis factor family. In terms of assembly, homotrimer, and heterotrimer of either two LTB and one LTA subunits or (less prevalent) two LTA and one LTB subunits. Interacts with TNFRSF14.

Its subcellular location is the secreted. The protein localises to the membrane. Cytokine that in its homotrimeric form binds to TNFRSF1A/TNFR1, TNFRSF1B/TNFBR and TNFRSF14/HVEM. In its heterotrimeric form with LTB binds to TNFRSF3/LTBR. Lymphotoxin is produced by lymphocytes and is cytotoxic for a wide range of tumor cells in vitro and in vivo. This is Lymphotoxin-alpha (LTA) from Homo sapiens (Human).